The chain runs to 243 residues: Protein GID8 homolog (243 aa).

Positions 40-72 (RKEDMNTLVMNFLVTEGYVEAAEKFQRESGTKP) constitute a LisH domain. A CTLH domain is found at 78–135 (TITDRMAVKKAVQNGNVEDAIEKVNDLNPEILDTNPELFFHLQQQRLIELIRQGKTEE).

The protein belongs to the GID8 family. In terms of assembly, interacts with RANBPM.

The protein resides in the cytoplasm. The chain is Protein GID8 homolog from Arabidopsis thaliana (Mouse-ear cress).